The following is a 686-amino-acid chain: Epsin (686 aa).

Positions 14-145 (DAVLNTPEIE…QDDQRIKEER (132 aa)) constitute an ENTH domain. Disordered stretches follow at residues 177 to 417 (YDSD…FNNN) and 463 to 571 (NSSM…TMRP). Residues 185–211 (NQRDSYGGNQRDSYGGNQRDSYGGNQR) show a composition bias toward polar residues. The span at 212–225 (ETTRRDSFNGRDEG) shows a compositional bias: basic and acidic residues. Positions 237 to 256 (SYDSDPYSNTRAEYENYSNR) are enriched in polar residues. 2 stretches are compositionally biased toward low complexity: residues 269 to 340 (SNNS…SGPS) and 383 to 417 (NNTN…FNNN). Positions 491–503 (FDQQSGDFSNKND) are enriched in polar residues. Over residues 504–521 (GQQKPKDTNDPWSKKDLF) the composition is skewed to basic and acidic residues. Positions 527 to 547 (GNQNPNQSPVNNTNNNNNGNT) are enriched in low complexity. A compositionally biased stretch (polar residues) spans 558–567 (PITSAGSTIP).

Belongs to the epsin family.

The protein resides in the membrane. The protein localises to the clathrin-coated pit. Its function is as follows. Binds to membranes enriched in phosphatidylinositol 4,5-bisphosphate (PtdIns(4,5)P2). The sequence is that of Epsin (epnA) from Dictyostelium discoideum (Social amoeba).